A 275-amino-acid chain; its full sequence is Large ribosomal subunit protein uL2 (275 aa).

2 disordered regions span residues 28 to 54 (APHA…TRHI) and 223 to 275 (VAMN…RNKK).

The protein belongs to the universal ribosomal protein uL2 family. In terms of assembly, part of the 50S ribosomal subunit. Forms a bridge to the 30S subunit in the 70S ribosome.

One of the primary rRNA binding proteins. Required for association of the 30S and 50S subunits to form the 70S ribosome, for tRNA binding and peptide bond formation. It has been suggested to have peptidyltransferase activity; this is somewhat controversial. Makes several contacts with the 16S rRNA in the 70S ribosome. The chain is Large ribosomal subunit protein uL2 from Saccharophagus degradans (strain 2-40 / ATCC 43961 / DSM 17024).